Here is a 495-residue protein sequence, read N- to C-terminus: ATP synthase subunit beta, chloroplastic (495 aa).

Gly172–Thr179 provides a ligand contact to ATP.

This sequence belongs to the ATPase alpha/beta chains family. F-type ATPases have 2 components, CF(1) - the catalytic core - and CF(0) - the membrane proton channel. CF(1) has five subunits: alpha(3), beta(3), gamma(1), delta(1), epsilon(1). CF(0) has four main subunits: a(1), b(1), b'(1) and c(9-12).

Its subcellular location is the plastid. It is found in the chloroplast thylakoid membrane. It carries out the reaction ATP + H2O + 4 H(+)(in) = ADP + phosphate + 5 H(+)(out). Produces ATP from ADP in the presence of a proton gradient across the membrane. The catalytic sites are hosted primarily by the beta subunits. This Eucomis bicolor (King's flower) protein is ATP synthase subunit beta, chloroplastic.